Here is a 470-residue protein sequence, read N- to C-terminus: Acyltransferase BOA11 (470 aa).

The active-site Proton acceptor is His156.

This sequence belongs to the plant acyltransferase family.

Its pathway is polyketide biosynthesis. Its function is as follows. Acyltransferase; part of the gene cluster B that mediates the biosynthesis of botcinic acid and its botcinin derivatives, acetate-derived polyketides that contribute to virulence when combined with the sesquiterpene botrydial. Botcinic acid and its derivatives have been shown to induce chlorosis and necrosis during host plant infection, but also have antifungal activities. Two polyketide synthases, BOA6 and BOA9, are involved in the biosynthesis of botcinins. BOA6 mediates the formation of the per-methylated tetraketide core by condensation of four units of malonyl-CoA with one unit of acetyl-CoA, which would be methylated in activated methylene groups to yield a bicyclic acid intermediate that could then either be converted to botrylactone derivatives or lose the starter acetate unit through a retro-Claisen type C-C bond cleavage to yield botcinin derivatives. The second polyketide synthase, BOA9, is probably required for the biosynthesis of the tetraketide side chain of botcinins. The methyltransferase (MT) domain within BOA6 is probably responsible for the incorporation of four methyl groups. The trans-enoyl reductase BOA5 might take over the enoyl reductase function of BOA6 that misses an ER domain. The monooxygenases BOA2, BOA3 and BOA4 might be involved in further hydroxylations at C4, C5 and C8, whereas BOA7, close to BOA9, could potentially be involved in the hydroxylation at C4 in the side chain of botcinins. The sequence is that of Acyltransferase BOA11 from Botryotinia fuckeliana (strain B05.10) (Noble rot fungus).